The primary structure comprises 433 residues: Serine--tRNA ligase (433 aa).

Position 235–237 (235–237) interacts with L-serine; sequence TSE. 266–268 is a binding site for ATP; that stretch reads RSE. Glu-289 is an L-serine binding site. 353–356 is an ATP binding site; the sequence is EISS. An L-serine-binding site is contributed by Ser-388.

The protein belongs to the class-II aminoacyl-tRNA synthetase family. Type-1 seryl-tRNA synthetase subfamily. As to quaternary structure, homodimer. The tRNA molecule binds across the dimer.

Its subcellular location is the cytoplasm. It catalyses the reaction tRNA(Ser) + L-serine + ATP = L-seryl-tRNA(Ser) + AMP + diphosphate + H(+). The catalysed reaction is tRNA(Sec) + L-serine + ATP = L-seryl-tRNA(Sec) + AMP + diphosphate + H(+). Its pathway is aminoacyl-tRNA biosynthesis; selenocysteinyl-tRNA(Sec) biosynthesis; L-seryl-tRNA(Sec) from L-serine and tRNA(Sec): step 1/1. In terms of biological role, catalyzes the attachment of serine to tRNA(Ser). Is also able to aminoacylate tRNA(Sec) with serine, to form the misacylated tRNA L-seryl-tRNA(Sec), which will be further converted into selenocysteinyl-tRNA(Sec). The polypeptide is Serine--tRNA ligase (Burkholderia ambifaria (strain ATCC BAA-244 / DSM 16087 / CCUG 44356 / LMG 19182 / AMMD) (Burkholderia cepacia (strain AMMD))).